Here is a 241-residue protein sequence, read N- to C-terminus: Endothelial protein C receptor (241 aa).

Residues 1 to 17 (MLTTLLPLLPLLLPGWA) form the signal peptide. The Extracellular portion of the chain corresponds to 18-212 (LCSQEASDGP…GSQTGRSYTS (195 aa)). N-linked (GlcNAc...) asparagine glycosylation is found at Asn-49, Asn-66, Asn-138, and Asn-174. 2 disulfide bridges follow: Cys-120–Cys-188 and Cys-221–Cys-234. A helical transmembrane segment spans residues 213–233 (LVLGVLVGCFIVTGVAVGIFL). Topologically, residues 234-241 (CTGGRRRC) are cytoplasmic.

As to expression, expressed in endothelial cells.

The protein localises to the membrane. Binds activated protein C. Enhances protein C activation by the thrombin-thrombomodulin complex; plays a role in the protein C pathway controlling blood coagulation. The polypeptide is Endothelial protein C receptor (PROCR) (Bos taurus (Bovine)).